The primary structure comprises 312 residues: Olfactory receptor 1D2 (312 aa).

Topologically, residues 1–25 (MDGGNQSEGSEFLLLGMSESPEQQR) are extracellular. Residue Asn5 is glycosylated (N-linked (GlcNAc...) asparagine). The helical transmembrane segment at 26–49 (ILFWMFLSMYLVTVVGNVLIILAI) threads the bilayer. The Cytoplasmic segment spans residues 50–57 (SSDSRLHT). Residues 58-79 (PVYFFLANLSFTDLFFVTNTIP) form a helical membrane-spanning segment. The Extracellular portion of the chain corresponds to 80–100 (KMLVNLQSHNKAISYAGCLTQ). Cys97 and Cys189 are joined by a disulfide. Residues 101 to 120 (LYFLVSLVALDNLILAVMAY) traverse the membrane as a helical segment. Over 121-139 (DRYVAICCPLHYTTAMSPK) the chain is Cytoplasmic. Residues 140 to 158 (LCILLLSLCWVLSVLYGLI) form a helical membrane-spanning segment. The Extracellular portion of the chain corresponds to 159–196 (HTLLMTRVTFCGSRKIHYIFCEMYVLLRMACSNIQINH). Asn195 carries an N-linked (GlcNAc...) asparagine glycan. Residues 197 to 219 (TVLIATGCFIFLIPFGFVIISYV) traverse the membrane as a helical segment. Topologically, residues 220–236 (LIIRAILRIPSVSKKYK) are cytoplasmic. The chain crosses the membrane as a helical span at residues 237 to 259 (AFSTCASHLGAVSLFYGTLCMVY). The Extracellular portion of the chain corresponds to 260–271 (LKPLHTYSVKDS). A helical transmembrane segment spans residues 272–291 (VATVMYAVVTPMMNPFIYSL). Over 292–312 (RNKDMHGALGRLLDKHFKRLT) the chain is Cytoplasmic.

The protein belongs to the G-protein coupled receptor 1 family. In terms of tissue distribution, expressed in testis. Expressed in spermatozoa (at protein level). Expressed in olfactory epithelium.

It localises to the cell membrane. In terms of biological role, odorant receptor which may be involved in sperm chemotaxis. Bourgeonal is a strong chemoattractant for sperm in vitro and is shown to be a strong agonist for OR1D2 in vitro. May also function in olfactory reception. This chain is Olfactory receptor 1D2 (OR1D2), found in Homo sapiens (Human).